A 697-amino-acid polypeptide reads, in one-letter code: Elongation factor G (697 aa).

The region spanning 8-290 is the tr-type G domain; that stretch reads ERYRNIGIMA…AVLSYMPSPV (283 aa). GTP-binding positions include 17–24, 88–92, and 142–145; these read AHIDAGKT, DTPGH, and NKMD.

The protein belongs to the TRAFAC class translation factor GTPase superfamily. Classic translation factor GTPase family. EF-G/EF-2 subfamily.

The protein resides in the cytoplasm. In terms of biological role, catalyzes the GTP-dependent ribosomal translocation step during translation elongation. During this step, the ribosome changes from the pre-translocational (PRE) to the post-translocational (POST) state as the newly formed A-site-bound peptidyl-tRNA and P-site-bound deacylated tRNA move to the P and E sites, respectively. Catalyzes the coordinated movement of the two tRNA molecules, the mRNA and conformational changes in the ribosome. This Nitrosococcus oceani (strain ATCC 19707 / BCRC 17464 / JCM 30415 / NCIMB 11848 / C-107) protein is Elongation factor G.